A 652-amino-acid chain; its full sequence is Type III restriction-modification enzyme StyLTI Mod subunit (652 aa).

The binding of S-adenosyl methionine stretch occupies residues D135–Y138.

It belongs to the N(4)/N(6)-methyltransferase family. As to quaternary structure, homodimer, also forms a functional restriction-competent complex with Res.

It catalyses the reaction a 2'-deoxyadenosine in DNA + S-adenosyl-L-methionine = an N(6)-methyl-2'-deoxyadenosine in DNA + S-adenosyl-L-homocysteine + H(+). Functionally, a beta subtype methylase that binds the system-specific DNA recognition site 5'-CAGAG-3' and methylates A-4 (of only 1 strand as the other does not have an A residue). DNA restriction requires both the Res and Mod subunits. This Salmonella typhimurium (strain LT2 / SGSC1412 / ATCC 700720) protein is Type III restriction-modification enzyme StyLTI Mod subunit.